The sequence spans 64 residues: Large ribosomal subunit protein bL32 (64 aa).

A disordered region spans residues 1-35 (MAVQKSRVTPSRRGMRRAHDALSAKQLSTDPTTGE).

This sequence belongs to the bacterial ribosomal protein bL32 family.

The chain is Large ribosomal subunit protein bL32 from Stenotrophomonas maltophilia (strain R551-3).